Reading from the N-terminus, the 118-residue chain is Co-chaperonin GroES (118 aa).

It belongs to the GroES chaperonin family. In terms of assembly, heptamer of 7 subunits arranged in a ring. Interacts with the chaperonin GroEL.

Its subcellular location is the cytoplasm. Together with the chaperonin GroEL, plays an essential role in assisting protein folding. The GroEL-GroES system forms a nano-cage that allows encapsulation of the non-native substrate proteins and provides a physical environment optimized to promote and accelerate protein folding. GroES binds to the apical surface of the GroEL ring, thereby capping the opening of the GroEL channel. In Helicobacter pylori (strain P12), this protein is Co-chaperonin GroES.